A 206-amino-acid chain; its full sequence is Large ribosomal subunit protein uL4 (206 aa).

Over residues 65-76 (KQKGTGRARHSS) the composition is skewed to basic residues. The tract at residues 65–94 (KQKGTGRARHSSARAPQFRGGGKAHGPVVR) is disordered.

This sequence belongs to the universal ribosomal protein uL4 family. As to quaternary structure, part of the 50S ribosomal subunit.

Functionally, one of the primary rRNA binding proteins, this protein initially binds near the 5'-end of the 23S rRNA. It is important during the early stages of 50S assembly. It makes multiple contacts with different domains of the 23S rRNA in the assembled 50S subunit and ribosome. Its function is as follows. Forms part of the polypeptide exit tunnel. In Bartonella quintana (strain Toulouse) (Rochalimaea quintana), this protein is Large ribosomal subunit protein uL4.